Consider the following 319-residue polypeptide: Ribosomal large subunit pseudouridine synthase C (319 aa).

An S4 RNA-binding domain is found at 20–83 (QRIDNFLRTQ…AEREEEAVSP (64 aa)). Aspartate 144 is an active-site residue.

It belongs to the pseudouridine synthase RluA family.

It catalyses the reaction uridine(955/2504/2580) in 23S rRNA = pseudouridine(955/2504/2580) in 23S rRNA. Its function is as follows. Responsible for synthesis of pseudouridine from uracil at positions 955, 2504 and 2580 in 23S ribosomal RNA. The polypeptide is Ribosomal large subunit pseudouridine synthase C (Escherichia coli (strain K12)).